A 429-amino-acid polypeptide reads, in one-letter code: Choline kinase A2 (429 aa).

Residues K82–M88, R111, E152–P158, and Q257 contribute to the ATP site. G84–S86 is a substrate binding site. E258 contacts Ca(2+). D301 is a binding site for ATP. The Ca(2+) site is built by E320 and I323.

It belongs to the choline/ethanolamine kinase family. Homodimer. A small proportion exists as higher oligomers. Requires Mg(2+) as cofactor.

The catalysed reaction is choline + ATP = phosphocholine + ADP + H(+). It catalyses the reaction ethanolamine + ATP = phosphoethanolamine + ADP + H(+). Its pathway is phospholipid metabolism; phosphatidylcholine biosynthesis; phosphocholine from choline: step 1/1. The protein operates within phospholipid metabolism; phosphatidylethanolamine biosynthesis; phosphatidylethanolamine from ethanolamine: step 1/3. Inhibited by Ca(2+). Mild inhibition by high levels of Mg(2+)(&gt;10 mM). Functionally, catalyzes the first step in phosphatidylcholine biosynthesis. May contribute to phosphatidylethanolamine biosynthesis. Phosphorylates choline and ethanolamine but the activity is much higher with choline. In Caenorhabditis elegans, this protein is Choline kinase A2.